A 334-amino-acid polypeptide reads, in one-letter code: Phosphate acyltransferase (334 aa).

This sequence belongs to the PlsX family. As to quaternary structure, homodimer. Probably interacts with PlsY.

The protein resides in the cytoplasm. The catalysed reaction is a fatty acyl-[ACP] + phosphate = an acyl phosphate + holo-[ACP]. It participates in lipid metabolism; phospholipid metabolism. Its function is as follows. Catalyzes the reversible formation of acyl-phosphate (acyl-PO(4)) from acyl-[acyl-carrier-protein] (acyl-ACP). This enzyme utilizes acyl-ACP as fatty acyl donor, but not acyl-CoA. The protein is Phosphate acyltransferase of Thermotoga petrophila (strain ATCC BAA-488 / DSM 13995 / JCM 10881 / RKU-1).